The following is a 220-amino-acid chain: Probable GTP-binding protein EngB (220 aa).

The EngB-type G domain maps to 31-205 (AGVEIAFAGR…LGILNEWCHP (175 aa)). Residues 39-46 (GRSNAGKS), 66-70 (GRTQL), 84-87 (DLPG), 151-154 (TKAD), and 184-186 (FSS) contribute to the GTP site. Mg(2+) is bound by residues serine 46 and threonine 68.

This sequence belongs to the TRAFAC class TrmE-Era-EngA-EngB-Septin-like GTPase superfamily. EngB GTPase family. Mg(2+) is required as a cofactor.

Functionally, necessary for normal cell division and for the maintenance of normal septation. In Shewanella sediminis (strain HAW-EB3), this protein is Probable GTP-binding protein EngB.